The following is a 398-amino-acid chain: tRNA N6-adenosine threonylcarbamoyltransferase (398 aa).

A divalent metal cation is bound by residues His162, His166, and Tyr183. Substrate is bound by residues 183–187, Asp215, Gly230, Glu234, and Asn329; that span reads YVSGG. Asp357 contributes to the a divalent metal cation binding site.

This sequence belongs to the KAE1 / TsaD family. In terms of assembly, component of the EKC/KEOPS complex composed of at least BUD32, CGI121, GON7, KAE1 and PCC1; the whole complex dimerizes. The cofactor is a divalent metal cation.

It localises to the cytoplasm. Its subcellular location is the nucleus. It catalyses the reaction L-threonylcarbamoyladenylate + adenosine(37) in tRNA = N(6)-L-threonylcarbamoyladenosine(37) in tRNA + AMP + H(+). Component of the EKC/KEOPS complex that is required for the formation of a threonylcarbamoyl group on adenosine at position 37 (t(6)A37) in tRNAs that read codons beginning with adenine. The complex is probably involved in the transfer of the threonylcarbamoyl moiety of threonylcarbamoyl-AMP (TC-AMP) to the N6 group of A37. KAE1 likely plays a direct catalytic role in this reaction, but requires other protein(s) of the complex to fulfill this activity. The EKC/KEOPS complex also promotes both telomere uncapping and telomere elongation. The complex is required for efficient recruitment of transcriptional coactivators. The sequence is that of tRNA N6-adenosine threonylcarbamoyltransferase from Cryptococcus neoformans var. neoformans serotype D (strain B-3501A) (Filobasidiella neoformans).